The chain runs to 197 residues: HTH-type transcriptional regulator BetI (197 aa).

Positions 8–68 (PIRRQQLIEA…ATMRYLMSVL (61 aa)) constitute an HTH tetR-type domain. The H-T-H motif DNA-binding region spans 31–50 (SIALIARLAGVSNGIISHYF).

It participates in amine and polyamine biosynthesis; betaine biosynthesis via choline pathway [regulation]. Its function is as follows. Repressor involved in the biosynthesis of the osmoprotectant glycine betaine. It represses transcription of the choline transporter BetT and the genes of BetAB involved in the synthesis of glycine betaine. The protein is HTH-type transcriptional regulator BetI of Pseudomonas fluorescens (strain Pf0-1).